The sequence spans 82 residues: Translational regulator CsrA (82 aa).

It belongs to the CsrA/RsmA family. In terms of assembly, homodimer; the beta-strands of each monomer intercalate to form a hydrophobic core, while the alpha-helices form wings that extend away from the core.

Its subcellular location is the cytoplasm. Functionally, a translational regulator that binds mRNA to regulate translation initiation and/or mRNA stability. Usually binds in the 5'-UTR at or near the Shine-Dalgarno sequence preventing ribosome-binding, thus repressing translation. Its main target seems to be the major flagellin gene, while its function is anatagonized by FliW. The sequence is that of Translational regulator CsrA from Geobacillus sp. (strain WCH70).